Reading from the N-terminus, the 220-residue chain is Deoxyribose-phosphate aldolase (220 aa).

The active-site Proton donor/acceptor is the aspartate 89. Residue lysine 151 is the Schiff-base intermediate with acetaldehyde of the active site. The Proton donor/acceptor role is filled by lysine 180.

Belongs to the DeoC/FbaB aldolase family. DeoC type 1 subfamily.

Its subcellular location is the cytoplasm. The catalysed reaction is 2-deoxy-D-ribose 5-phosphate = D-glyceraldehyde 3-phosphate + acetaldehyde. It functions in the pathway carbohydrate degradation; 2-deoxy-D-ribose 1-phosphate degradation; D-glyceraldehyde 3-phosphate and acetaldehyde from 2-deoxy-alpha-D-ribose 1-phosphate: step 2/2. In terms of biological role, catalyzes a reversible aldol reaction between acetaldehyde and D-glyceraldehyde 3-phosphate to generate 2-deoxy-D-ribose 5-phosphate. In Staphylococcus epidermidis (strain ATCC 12228 / FDA PCI 1200), this protein is Deoxyribose-phosphate aldolase.